A 223-amino-acid chain; its full sequence is Endonuclease NucS (223 aa).

This sequence belongs to the NucS endonuclease family.

It localises to the cytoplasm. In terms of biological role, cleaves both 3' and 5' ssDNA extremities of branched DNA structures. The chain is Endonuclease NucS from Streptomyces coelicolor (strain ATCC BAA-471 / A3(2) / M145).